Here is a 68-residue protein sequence, read N- to C-terminus: Small cysteine-rich protein 2 (68 aa).

The signal sequence occupies residues 1–24 (MAVKFHLCLLLIILVGMGAHVAFA).

Belongs to the Cnidaria small cysteine-rich protein (SCRiP) family. gamma subfamily. In terms of processing, contains 4 disulfide bonds.

It localises to the secreted. The protein localises to the nematocyst. Functionally, induces neurotoxic symptoms on zebrafish. Has also been claimed to be implied in calcification, but tests on homolog proteins suggest that proteins of this family have a neurotoxic function and not a calcification function. This is Small cysteine-rich protein 2 from Orbicella faveolata (Mountainous star coral).